A 133-amino-acid polypeptide reads, in one-letter code: ATP synthase epsilon chain (133 aa).

Belongs to the ATPase epsilon chain family. F-type ATPases have 2 components, CF(1) - the catalytic core - and CF(0) - the membrane proton channel. CF(1) has five subunits: alpha(3), beta(3), gamma(1), delta(1), epsilon(1). CF(0) has three main subunits: a, b and c.

The protein localises to the cellular thylakoid membrane. Functionally, produces ATP from ADP in the presence of a proton gradient across the membrane. The chain is ATP synthase epsilon chain from Prochlorococcus marinus (strain MIT 9303).